A 481-amino-acid chain; its full sequence is F-box protein At1g49360 (481 aa).

Positions 105–156 constitute an F-box domain; sequence LKEDLFLPSDLVRLILSRLSFKDNIRSSTVCKAWGDIAASVRVKSRRCWLLY.

The sequence is that of F-box protein At1g49360 from Arabidopsis thaliana (Mouse-ear cress).